Here is a 163-residue protein sequence, read N- to C-terminus: Ribonuclease H (163 aa).

In terms of domain architecture, RNase H type-1 spans 4 to 146; the sequence is SPKKVLIYTD…CDRLAVRASQ (143 aa). Residues D13, E51, D73, and D138 each contribute to the Mg(2+) site.

This sequence belongs to the RNase H family. Monomer. Requires Mg(2+) as cofactor.

The protein resides in the cytoplasm. The enzyme catalyses Endonucleolytic cleavage to 5'-phosphomonoester.. Its function is as follows. Endonuclease that specifically degrades the RNA of RNA-DNA hybrids. The polypeptide is Ribonuclease H (Rippkaea orientalis (strain PCC 8801 / RF-1) (Cyanothece sp. (strain PCC 8801))).